The chain runs to 390 residues: Guanine nucleotide-binding protein alpha-7 subunit (390 aa).

Composition is skewed to low complexity over residues 1 to 12 and 22 to 42; these read MSSTTTNTTTAT and SSSPQSPSSSTSTLSPPMSPS. The segment at 1 to 42 is disordered; it reads MSSTTTNTTTATPAIQVNGNQSSSPQSPSSSTSTLSPPMSPS. In terms of domain architecture, G-alpha spans 70 to 390; that stretch reads SELKLLLLGT…TRQTMEEGGI (321 aa). Positions 73–86 are G1 motif; it reads KLLLLGTGDSGKST. GTP contacts are provided by residues 78 to 85, 213 to 219, 238 to 242, 307 to 310, and Ala363; these read GTGDSGKS, LYTRVAS, DVAGQ, and NKRD. Ser85 provides a ligand contact to Mg(2+). The segment at 211–219 is G2 motif; the sequence is DILYTRVAS. Residues 234-243 are G3 motif; that stretch reads FRMIDVAGQR. A G4 motif region spans residues 303–310; that stretch reads ILFLNKRD. Residues 361-366 are G5 motif; sequence TTATDT.

It belongs to the G-alpha family. As to quaternary structure, g proteins are composed of 3 units; alpha, beta and gamma. The alpha chain contains the guanine nucleotide binding site.

Its function is as follows. Guanine nucleotide-binding proteins (G proteins) are involved as modulators or transducers in various transmembrane signaling systems. The chain is Guanine nucleotide-binding protein alpha-7 subunit (gpaG) from Dictyostelium discoideum (Social amoeba).